A 392-amino-acid chain; its full sequence is Succinate--CoA ligase [ADP-forming] subunit beta (392 aa).

Residues 9–244 form the ATP-grasp domain; that stretch reads KALLAQYGVG…LSEEESSEIE (236 aa). ATP is bound by residues Lys-46, 53 to 55, Glu-99, Leu-102, and Glu-107; that span reads GRG. 2 residues coordinate Mg(2+): Asn-199 and Asp-213. Substrate is bound by residues Asn-264 and 321-323; that span reads GIV.

Belongs to the succinate/malate CoA ligase beta subunit family. In terms of assembly, heterotetramer of two alpha and two beta subunits. The cofactor is Mg(2+).

It catalyses the reaction succinate + ATP + CoA = succinyl-CoA + ADP + phosphate. The catalysed reaction is GTP + succinate + CoA = succinyl-CoA + GDP + phosphate. Its pathway is carbohydrate metabolism; tricarboxylic acid cycle; succinate from succinyl-CoA (ligase route): step 1/1. Functionally, succinyl-CoA synthetase functions in the citric acid cycle (TCA), coupling the hydrolysis of succinyl-CoA to the synthesis of either ATP or GTP and thus represents the only step of substrate-level phosphorylation in the TCA. The beta subunit provides nucleotide specificity of the enzyme and binds the substrate succinate, while the binding sites for coenzyme A and phosphate are found in the alpha subunit. The sequence is that of Succinate--CoA ligase [ADP-forming] subunit beta from Wolinella succinogenes (strain ATCC 29543 / DSM 1740 / CCUG 13145 / JCM 31913 / LMG 7466 / NCTC 11488 / FDC 602W) (Vibrio succinogenes).